The sequence spans 493 residues: Putative lon protease homolog (493 aa).

52–59 is an ATP binding site; that stretch reads GPPGVGKS.

The protein belongs to the peptidase S16 family.

In Thermoplasma acidophilum (strain ATCC 25905 / DSM 1728 / JCM 9062 / NBRC 15155 / AMRC-C165), this protein is Putative lon protease homolog.